We begin with the raw amino-acid sequence, 1655 residues long: Protein scribble homolog (1655 aa).

The tract at residues 1–818 is sufficient for targeting to adherens junction and to inhibit cell proliferation; that stretch reads MLKCIPLWRC…MRVWRERMVE (818 aa). Position 37 is a phosphoserine (S37). LRR repeat units lie at residues 37-58, 60-81, 83-104, 106-127, 129-150, 152-174, 175-197, 198-219, 221-243, 244-265, 267-288, 290-312, 313-334, 336-357, 359-381, and 382-402; these read SLEELLLDANQLRELPKPFFRL, NLRKLGLSDNEIQRLPPEVANF, QLVELDVSRNDIPEIPESIKFC, ALEIADFSGNPLSRLPDGFTQL, SLAHLALNDVSLQALPGDVGNL, NLVTLELRENLLKSLPASLSFLV, KLEQLDLGGNDLEVLPDTLGALP, NLRELWLDRNQLSALPPELGNL, RLVCLDVSENRLEELPAELGGLV, LLTDLLLSQNLLRRLPDGIGQL, QLSILKVDQNRLCEVTEAIGDC, NLSELILTENLLMALPRSLGKLT, KLTNLNVDRNHLEALPPEIGGC, ALSVLSLRDNRLAVLPPELAHT, ELHVLDVAGNRLQSLPFALTHLN, and LKALWLAENQAQPMLRFQTED. Position 378 is a phosphothreonine (T378). Disordered stretches follow at residues 417-440, 459-606, and 628-702; these read PQQPPPSLEDAGQQGSLSETWSDA, DAEE…IRKD, and LLQG…VSAP. A coiled-coil region spans residues 458–474; sequence EDAEEAAAEKRGLQRRA. At T475 the chain carries Phosphothreonine. Residues 479–494 are compositionally biased toward basic and acidic residues; that stretch reads SELKVMKRSIEGRRSE. Residue S504 is modified to Phosphoserine. Over residues 537–555 the composition is skewed to low complexity; the sequence is EGPSAEAQGGSQQEATTAG. Composition is skewed to acidic residues over residues 556–565 and 660–694; these read GEEDAEEDYQ and EEEEEEEGSPQEEEEEEEEENRAEEEEASTEEEDK. Positions 656–701 form a coiled coil; the sequence is RAQKEEEEEEEGSPQEEEEEEEEENRAEEEEASTEEEDKEGAVVSA. S688 carries the post-translational modification Phosphoserine. T689 is modified (phosphothreonine). Phosphoserine is present on residues S708 and S764. The tract at residues 717-1229 is interaction with ARHGEF7; sequence IEPARIEEEE…SLESISSIDR (513 aa). The PDZ 1 domain maps to 728 to 815; it reads TLTILRQTGG…AVQMRVWRER (88 aa). The tract at residues 728–1194 is required for interaction with VIM; sequence TLTILRQTGG…TVLVCDGFEA (467 aa). T826 is modified (phosphothreonine). The interval 827–853 is disordered; that stretch reads PLRPEDDYSPRERRGGGLRLPLLPPES. Residues 829–841 show a composition bias toward basic and acidic residues; that stretch reads RPEDDYSPRERRG. Phosphoserine is present on residues S835, S853, S875, and S939. 3 consecutive PDZ domains span residues 862–950, 1004–1093, and 1100–1194; these read VACL…EREA, EIRL…RRDP, and ELCI…GFEA. The interaction with tick-borne encephalitis virus RNA-directed RNA polymerase NS5 stretch occupies residues 1105–1117; that stretch reads KAPGERLGISIRG. 11 positions are modified to phosphoserine: S1140, S1220, S1223, S1226, S1232, S1276, S1279, S1295, S1298, S1306, and S1309. Over residues 1227–1242 the composition is skewed to basic and acidic residues; that stretch reads IDRELSPEGPGKEKEL. Positions 1227-1246 are disordered; the sequence is IDRELSPEGPGKEKELPGQT. Residues 1277–1489 are disordered; it reads AGSVQRVPSG…APERALSPAE (213 aa). Pro residues predominate over residues 1302-1311; that stretch reads QQPPSPPSPD. Position 1342 is a phosphothreonine (T1342). At S1348 the chain carries Phosphoserine. A compositionally biased stretch (basic and acidic residues) spans 1353–1365; that stretch reads SFRERQKYFELEV. Residue S1378 is modified to Phosphoserine. Residues 1379 to 1419 adopt a coiled-coil conformation; that stretch reads LVGADDLRKMQEEEARKLQQKRAQMLREAAEAGAEARLALD. Residues 1383 to 1395 show a composition bias toward basic and acidic residues; sequence DDLRKMQEEEARK. The segment covering 1409 to 1421 has biased composition (low complexity); sequence EAGAEARLALDGE. Residues 1422-1432 show a composition bias toward acidic residues; the sequence is TLGEEEQEDEQ. S1437, S1445, and S1448 each carry phosphoserine. A compositionally biased stretch (basic and acidic residues) spans 1461 to 1472; the sequence is AKAERRHQERLR. Phosphoserine occurs at positions 1475, 1486, and 1508. A disordered region spans residues 1520–1568; it reads LSRSQEGRGTRGPLERLAEAPSPAPTPSPTPVEDLGPQTSTSPGRLPLS. The segment covering 1524 to 1537 has biased composition (basic and acidic residues); the sequence is QEGRGTRGPLERLA. S1541 bears the Phosphoserine mark. The residue at position 1545 (T1545) is a Phosphothreonine. Residues S1547, S1561, and S1591 each carry the phosphoserine modification. Positions 1622 to 1655 are disordered; that stretch reads GRPSPGAVGPEDVALCSSRRPVRPGRRGLGPVPS.

It belongs to the LAP (LRR and PDZ) protein family. In terms of assembly, interacts with UBE3A. Interacts with PAK1 and PAK2. Interacts (via PDZ domains) with VANGL2. Interacts (via PDZ domains) with LPP and TRIP6; the interaction is direct. Interacts (via PDZ domains) with TJP2. Interacts (via PDZ domains) with APC; may mediate APC targeting to adherens junctions of epithelial cells. Interacts (via PDZ domains) with TSHR; regulates TSHR trafficking and function. Interacts with ARHGEF7 and GIT1; interacts directly with ARHGEF7. Interacts with CTNNB1. Interacts with MAPK12. Interacts (via PDZ domains 1 and 3) with MCC. Interacts with DLG5. Interacts with STK4/MST1 and LATS1 in the presence of DLG5. Interacts (via PDZ domain 3) with CRTAM (via PDZ-binding motif); the interaction promotes CRTAM and SCRIB polarization in a subset of CD4+ T-cells. Interacts with YES1, when YES1 is in a closed conformation; the interaction facilitates YES1 autophosphorylation. Interacts (via PDZ domains) with VIM; the interaction protects SCRIB from proteasomal degradation and facilitates SCRIB localization to intermediate filaments, the interaction is reduced by cell contact inhibition. As to quaternary structure, (Microbial infection) Interacts (via fourth PDZ domain) with tick-borne encephalitis virus RNA-directed RNA polymerase NS5; this interaction targets viral NS5 to the cell membrane periphery and nucleus and prevents STAT1 phosphorylation, and thus, the activation of the JAK-STAT signaling pathway. Interacts with HPV E6. Interacts with influenza A virus protein NS1; the interaction results in the translocation of SCRIB from the cell membrane to perinuclear puncta. In terms of processing, ubiquitinated; targeted for UBE3A-dependent multiubiquitination in the presence of high-risk HPV E6 proteins and degraded. Palmitoylated. Could be depalmitoylated by LYPLA1 and/or LYPLA2. Palmitoylation of SCRIB by ZDHHC7 is required for its localization to cell-cell junctions, function in the establishement of epithelial cell polarity and the regulation of downstream signaling pathways important for epithelial cell differentiation. Expressed in kidney, skeletal muscles, liver, lung, breast, intestine, placenta and skin mainly in epithelial cells (at protein level).

Its subcellular location is the cell membrane. The protein localises to the cell junction. It localises to the adherens junction. The protein resides in the cell projection. It is found in the lamellipodium. Its subcellular location is the cytoplasm. The protein localises to the postsynapse. It localises to the presynapse. Functionally, scaffold protein involved in different aspects of polarized cell differentiation regulating epithelial and neuronal morphogenesis and T-cell polarization. Via its interaction with CRTAM, required for the late phase polarization of a subset of CD4+ T-cells, which in turn regulates TCR-mediated proliferation and IFNG and IL22 production. Plays a role in cell directional movement, cell orientation, cell sheet organization and Golgi complex polarization at the cell migration front. Promotes epithelial cell layer barrier function via maintaining cell-cell adhesion. Most probably functions in the establishment of apico-basal cell polarity. May function in cell proliferation regulating progression from G1 to S phase and as a positive regulator of apoptosis for instance during acinar morphogenesis of the mammary epithelium. May regulate cell invasion via MAPK-mediated cell migration and adhesion. May play a role in exocytosis and in the targeting of synaptic vesicles to synapses. Functions as an activator of Rac GTPase activity. In Homo sapiens (Human), this protein is Protein scribble homolog.